A 1814-amino-acid polypeptide reads, in one-letter code: MASSLAAQLSQIAAKSTNQLDLKAQRTAHSQSLIFDRKVASTQDFDTVYQICYEGFQELCQLDSRFTAFERTIFSEQSKAEDRTQLTAAQNKELDVALEAFLALVGGRLLLNPAVKAVEWLVRRFRIHEYNTSFTILTFLPYYTTPLFLNLLAILPEDLTPTFKVLIPYKKGSINPPRHPLVHSATTNKPFLAALNSYVLQVSRQQAHHHALLAFWAGIYTEAVAGMLDASRSGRREVEKQKHEDIVIRVLPILNDGFAMKNVSELVIGCYMVSVVLAQKASLQDKVLDGLMEAVAGSWTEETIESGLVCLAVLAQQKPETKLPRRALKAILRLDDVLKRLTEIATQYKTSHLLLGVVAGCLDDLPRQKDTARLDLLSRIFQNQLLGEPEMSKAMTLVLEATSSVHKDGAMSLDAQARLADLVQVFSQSESLQPTFQKTIAESSFDIAALEHNLQTVIDTAPAPRTVEDVEMEDVEKEEEQDNFSSAVESLSGEKLFKGSFLSTQSIPLFERLAQAFTLAVGSNEKCQTFSDLAALGKSEATKSPQYLSFFIRVFSGPYPMGTRATALNMITSFLTSTENTNLDFQALLPFLLVALTDASERVRREAAAALAAVGSLYKKNKKGEDVWARSNLYGQLKDIKWLPTRDAQKIFERAVLPSLEECIIDAAHIGRVLENTLRGVSVDANASELKKPLRLAFFTFLCSNAIELPLFTPKLGLLNILNRIDKAGGTTRTKELEPLLKTWRGFSEREVQDICEKERVPVSDVERQMVTIVTPKEKDAIMILLSNVSPHSESLRPSFIAAVFGRIKGIWARVAEDRQVVAAEQLFEISLGVSNLPLVNNCRDLLRSVQLPGSVLAQFLERIPVSLTDMEALGPAPKRRRTSQNNMIAMTVKDEAEFGKVMEKMTFILELVDSSSPETHPELADGLFQALAALHHFKSQIQSGMSYLLSLTLGSLLAIVNRSKESAKAQFDTSVIRADLVVDCVRTTESPQVQNAALLLVAGLSVIAPELVLHSVMPIFTFMGSSVLRKDDEYSVSVIDQTIDQVVPALIQSLRDQKRDVVSGTSELLLSFTAAFEHIPSHRRLRLFHALITKLGTQDFLFAVLAMLANRYAMDKDVLVLMTGLVSDASAPVELTTYSKFLGLVSDSLKPKPGISQVLLGIGSDDGREPQKVAVDLLRDLAYLFKHSSLKVKMAKTFASEDEEAIRQLRTIFSQILEQVLTIGDSVQSMKLVSQANGDVLAALFGTLTLVDFLDTIEVLLERPNDELRRKVLRLLEGRLRQNPERDSASQIRVLDFLPTLVDIIRNSADILLKHAAVACIDRIAEKYGKKDPSRVVSAAQVVASEACIGQTDDRIRIMGVLCLASMAETLGQVMIPALPEALSRSLALLELSLEEGKENSRLHDAVFSLFSALFVHIPYMISGPHLDKILLLSFKSANAEDCEDDSRQEALKMMARKVDMAATLGAVDRNWQYAVQAGPVATKETLEVVSLAVEKHPKSATGKNIGVLSSILFKAFDLRREQLALGANATFDAADVDEIEDALNDVTIKMIYKLNDTTFRPIFTKMLDWATSGLPKKDTQGSWARLTTFYKFLQVFFGTLQSIVTGYASYIIESVVSVLGKASPADKSTKALWLATMRLLRNAFEHDQDGMPVLPINPCLKLTITEFWQSPSHLNQISTPLINQLAHATNSSTAATVIAEAVPAITELAVAADSTDNHKELNTALMKFLRPSAGPNGKPAGGENPHTRLAALKAEQSLTEQLGEEWLALLPEMLPYISELMEDEDENVEREVRKWVKQIENVLGEKLDDMLT.

Residues 583 to 620 (LDFQALLPFLLVALTDASERVRREAAAALAAVGSLYKK) form an HEAT 1 repeat. The next 2 membrane-spanning stretches (helical) occupy residues 942–962 (IQSG…AIVN) and 998–1018 (ALLL…HSVM). HEAT repeat units follow at residues 1042–1079 (QTID…AFEH), 1249–1286 (LTLV…QNPE), 1293–1331 (IRVL…KYGK), and 1770–1807 (ALLP…VLGE).

It belongs to the HEATR1/UTP10 family. As to quaternary structure, component of the ribosomal small subunit (SSU) processome.

The protein resides in the nucleus. It localises to the nucleolus. It is found in the membrane. In terms of biological role, involved in nucleolar processing of pre-18S ribosomal RNA. Involved in ribosome biosynthesis. In Neosartorya fischeri (strain ATCC 1020 / DSM 3700 / CBS 544.65 / FGSC A1164 / JCM 1740 / NRRL 181 / WB 181) (Aspergillus fischerianus), this protein is U3 small nucleolar RNA-associated protein 10.